Consider the following 361-residue polypeptide: 3-dehydroquinate synthase (361 aa).

It belongs to the archaeal-type DHQ synthase family.

It catalyses the reaction 2-amino-2,3,7-trideoxy-D-lyxo-hept-6-ulosonate + NAD(+) + H2O = 3-dehydroquinate + NH4(+) + NADH + H(+). Its function is as follows. Catalyzes the oxidative deamination and cyclization of 2-amino-3,7-dideoxy-D-threo-hept-6-ulosonic acid (ADH) to yield 3-dehydroquinate (DHQ), which is fed into the canonical shikimic pathway of aromatic amino acid biosynthesis. The polypeptide is 3-dehydroquinate synthase (Methanococcus maripaludis (strain C5 / ATCC BAA-1333)).